A 150-amino-acid chain; its full sequence is UPF0178 protein PC1_0756 (150 aa).

The protein belongs to the UPF0178 family.

The polypeptide is UPF0178 protein PC1_0756 (Pectobacterium carotovorum subsp. carotovorum (strain PC1)).